A 153-amino-acid chain; its full sequence is Mitochondrial fission 1 protein (153 aa).

The Cytoplasmic segment spans residues 1–124 (MTQLPYAVDA…LIDDKVTKEG (124 aa)). A TPR repeat occupies 73–106 (RECLYYLALGNYKLGNYAQARKYNDALLENEPAN). The chain crosses the membrane as a helical span at residues 125 to 145 (LMGVAIISGVAVAAGVIGGVL). At 146-153 (LRNLGRKR) the chain is on the mitochondrial intermembrane side.

It belongs to the FIS1 family.

It localises to the mitochondrion outer membrane. In terms of biological role, has a role in mitochondrial fission. Has a role in outer membrane fission but not matrix separation. In Neurospora crassa (strain ATCC 24698 / 74-OR23-1A / CBS 708.71 / DSM 1257 / FGSC 987), this protein is Mitochondrial fission 1 protein (mtp-2).